Consider the following 456-residue polypeptide: Arginine biosynthesis bifunctional protein ArgJ, mitochondrial (456 aa).

Thr-184, Lys-213, Thr-224, Glu-311, Asn-451, and Thr-456 together coordinate substrate. The Nucleophile role is filled by Thr-224.

It belongs to the ArgJ family. Heterodimer of an alpha and a beta chain. In terms of processing, the alpha and beta chains are autoproteolytically processed from a single precursor protein within the mitochondrion.

The protein localises to the mitochondrion matrix. It catalyses the reaction N(2)-acetyl-L-ornithine + L-glutamate = N-acetyl-L-glutamate + L-ornithine. It carries out the reaction L-glutamate + acetyl-CoA = N-acetyl-L-glutamate + CoA + H(+). It functions in the pathway amino-acid biosynthesis; L-arginine biosynthesis; L-ornithine and N-acetyl-L-glutamate from L-glutamate and N(2)-acetyl-L-ornithine (cyclic): step 1/1. It participates in amino-acid biosynthesis; L-arginine biosynthesis; N(2)-acetyl-L-ornithine from L-glutamate: step 1/4. Functionally, catalyzes two activities which are involved in the cyclic version of arginine biosynthesis: the synthesis of acetylglutamate from glutamate and acetyl-CoA, and of ornithine by transacetylation between acetylornithine and glutamate. In Aspergillus oryzae (strain ATCC 42149 / RIB 40) (Yellow koji mold), this protein is Arginine biosynthesis bifunctional protein ArgJ, mitochondrial.